Here is a 208-residue protein sequence, read N- to C-terminus: Thymidylate kinase (208 aa).

12 to 19 (GVDGAGKS) is an ATP binding site.

The protein belongs to the thymidylate kinase family.

The enzyme catalyses dTMP + ATP = dTDP + ADP. Its function is as follows. Phosphorylation of dTMP to form dTDP in both de novo and salvage pathways of dTTP synthesis. This chain is Thymidylate kinase, found in Bordetella bronchiseptica (strain ATCC BAA-588 / NCTC 13252 / RB50) (Alcaligenes bronchisepticus).